The sequence spans 517 residues: Probable mannosyltransferase KTR7 (517 aa).

Over 1–23 (MAIRLNPKVRRFLLDKCRQKRYG) the chain is Cytoplasmic. A helical; Signal-anchor for type II membrane protein transmembrane segment spans residues 24–44 (FLFLGCIFAILYCMGTWPFFA). The tract at residues 45-85 (KDIVHDPNNLPYSLQDYSTDKDEPFFRGCTDTKLYLQNPAY) is stem region. At 45-517 (KDIVHDPNNL…IRRENFRVIE (473 aa)) the chain is on the lumenal side. A catalytic region spans residues 86 to 517 (SKMNASFVML…IRRENFRVIE (432 aa)). Residues N89 and N144 are each glycosylated (N-linked (GlcNAc...) asparagine). E367 acts as the Nucleophile in catalysis.

This sequence belongs to the glycosyltransferase 15 family.

It localises to the membrane. Its function is as follows. Possible glycosyltransferase that transfers an alpha-D-mannosyl residue from GDP-mannose into lipid-linked oligosaccharide, forming an alpha-(1-&gt;2)-D-mannosyl-D-mannose linkage. This is Probable mannosyltransferase KTR7 (KTR7) from Saccharomyces cerevisiae (strain ATCC 204508 / S288c) (Baker's yeast).